The chain runs to 179 residues: Acireductone dioxygenase (179 aa).

A disordered region spans residues 7–26; sequence MDDAPGDPRQPHRPDPGRPV. Fe(2+) is bound by residues His88, His90, Glu94, and His133. Positions 88, 90, 94, and 133 each coordinate Ni(2+).

The protein belongs to the acireductone dioxygenase (ARD) family. As to quaternary structure, monomer. Interacts with MMP14. Fe(2+) is required as a cofactor. It depends on Ni(2+) as a cofactor. Detected in heart, colon, lung, stomach, brain, spleen, liver, skeletal muscle and kidney.

The protein resides in the cytoplasm. It is found in the nucleus. Its subcellular location is the cell membrane. It carries out the reaction 1,2-dihydroxy-5-(methylsulfanyl)pent-1-en-3-one + O2 = 4-methylsulfanyl-2-oxobutanoate + formate + 2 H(+). It catalyses the reaction 1,2-dihydroxy-5-(methylsulfanyl)pent-1-en-3-one + O2 = 3-(methylsulfanyl)propanoate + CO + formate + 2 H(+). The protein operates within amino-acid biosynthesis; L-methionine biosynthesis via salvage pathway; L-methionine from S-methyl-5-thio-alpha-D-ribose 1-phosphate: step 5/6. Functionally, catalyzes 2 different reactions between oxygen and the acireductone 1,2-dihydroxy-3-keto-5-methylthiopentene (DHK-MTPene) depending upon the metal bound in the active site. Fe-containing acireductone dioxygenase (Fe-ARD) produces formate and 2-keto-4-methylthiobutyrate (KMTB), the alpha-ketoacid precursor of methionine in the methionine recycle pathway. Ni-containing acireductone dioxygenase (Ni-ARD) produces methylthiopropionate, carbon monoxide and formate, and does not lie on the methionine recycle pathway. Also down-regulates cell migration mediated by MMP14. Necessary for hepatitis C virus replication in an otherwise non-permissive cell line. The polypeptide is Acireductone dioxygenase (Homo sapiens (Human)).